A 353-amino-acid chain; its full sequence is Photosystem II D2 protein (353 aa).

Thr2 is modified (N-acetylthreonine). Thr2 is subject to Phosphothreonine. A helical membrane pass occupies residues 41–61 (CAYFALGGWFTGTTFVTSWYT). A chlorophyll a-binding site is contributed by His118. The chain crosses the membrane as a helical span at residues 125–141 (GFMLRQFELARSVQLRP). Pheophytin a contacts are provided by Gln130 and Asn143. Residues 153–166 (VFVSVFLIYPLGQS) traverse the membrane as a helical segment. Residue His198 coordinates chlorophyll a. The helical transmembrane segment at 208–228 (AALLCAIHGATVENTLFEDGD) threads the bilayer. His215 and Phe262 together coordinate a plastoquinone. His215 contacts Fe cation. Position 269 (His269) interacts with Fe cation. A helical transmembrane segment spans residues 279 to 295 (GLWMSAIGVVGLALNLR).

The protein belongs to the reaction center PufL/M/PsbA/D family. PSII is composed of 1 copy each of membrane proteins PsbA, PsbB, PsbC, PsbD, PsbE, PsbF, PsbH, PsbI, PsbJ, PsbK, PsbL, PsbM, PsbT, PsbX, PsbY, PsbZ, Psb30/Ycf12, at least 3 peripheral proteins of the oxygen-evolving complex and a large number of cofactors. It forms dimeric complexes. The D1/D2 heterodimer binds P680, chlorophylls that are the primary electron donor of PSII, and subsequent electron acceptors. It shares a non-heme iron and each subunit binds pheophytin, quinone, additional chlorophylls, carotenoids and lipids. There is also a Cl(-1) ion associated with D1 and D2, which is required for oxygen evolution. The PSII complex binds additional chlorophylls, carotenoids and specific lipids. serves as cofactor. Post-translationally, phosphorylated on threonine residue(s); phosphorylation increases with increasing light levels.

It is found in the plastid. Its subcellular location is the chloroplast thylakoid membrane. The catalysed reaction is 2 a plastoquinone + 4 hnu + 2 H2O = 2 a plastoquinol + O2. Photosystem II (PSII) is a light-driven water:plastoquinone oxidoreductase that uses light energy to abstract electrons from H(2)O, generating O(2) and a proton gradient subsequently used for ATP formation. It consists of a core antenna complex that captures photons, and an electron transfer chain that converts photonic excitation into a charge separation. The D1/D2 (PsbA/PsbD) reaction center heterodimer binds P680, the primary electron donor of PSII as well as several subsequent electron acceptors. D2 is needed for assembly of a stable PSII complex. The chain is Photosystem II D2 protein from Marchantia polymorpha (Common liverwort).